The primary structure comprises 197 residues: Dephospho-CoA kinase (197 aa).

One can recognise a DPCK domain in the interval 2-197 (IIGLTGGIAS…GAIKDLANLV (196 aa)). 10–15 (ASGKST) lines the ATP pocket.

The protein belongs to the CoaE family.

The protein resides in the cytoplasm. The enzyme catalyses 3'-dephospho-CoA + ATP = ADP + CoA + H(+). Its pathway is cofactor biosynthesis; coenzyme A biosynthesis; CoA from (R)-pantothenate: step 5/5. Catalyzes the phosphorylation of the 3'-hydroxyl group of dephosphocoenzyme A to form coenzyme A. This Streptococcus thermophilus (strain ATCC BAA-250 / LMG 18311) protein is Dephospho-CoA kinase.